A 214-amino-acid chain; its full sequence is Thiamine-phosphate synthase (214 aa).

Residues 37–41 (QYREK) and Asn73 contribute to the 4-amino-2-methyl-5-(diphosphooxymethyl)pyrimidine site. Mg(2+) is bound by residues Asp74 and Asp93. Residue Ser112 participates in 4-amino-2-methyl-5-(diphosphooxymethyl)pyrimidine binding. 139 to 141 (TIS) provides a ligand contact to 2-[(2R,5Z)-2-carboxy-4-methylthiazol-5(2H)-ylidene]ethyl phosphate. Position 142 (Lys142) interacts with 4-amino-2-methyl-5-(diphosphooxymethyl)pyrimidine. 2-[(2R,5Z)-2-carboxy-4-methylthiazol-5(2H)-ylidene]ethyl phosphate-binding positions include Gly171 and 191–192 (IS).

Belongs to the thiamine-phosphate synthase family. The cofactor is Mg(2+).

The catalysed reaction is 2-[(2R,5Z)-2-carboxy-4-methylthiazol-5(2H)-ylidene]ethyl phosphate + 4-amino-2-methyl-5-(diphosphooxymethyl)pyrimidine + 2 H(+) = thiamine phosphate + CO2 + diphosphate. The enzyme catalyses 2-(2-carboxy-4-methylthiazol-5-yl)ethyl phosphate + 4-amino-2-methyl-5-(diphosphooxymethyl)pyrimidine + 2 H(+) = thiamine phosphate + CO2 + diphosphate. It catalyses the reaction 4-methyl-5-(2-phosphooxyethyl)-thiazole + 4-amino-2-methyl-5-(diphosphooxymethyl)pyrimidine + H(+) = thiamine phosphate + diphosphate. Its pathway is cofactor biosynthesis; thiamine diphosphate biosynthesis; thiamine phosphate from 4-amino-2-methyl-5-diphosphomethylpyrimidine and 4-methyl-5-(2-phosphoethyl)-thiazole: step 1/1. In terms of biological role, condenses 4-methyl-5-(beta-hydroxyethyl)thiazole monophosphate (THZ-P) and 2-methyl-4-amino-5-hydroxymethyl pyrimidine pyrophosphate (HMP-PP) to form thiamine monophosphate (TMP). The polypeptide is Thiamine-phosphate synthase (Listeria monocytogenes serotype 4a (strain HCC23)).